The sequence spans 502 residues: MAIKAEEISALLRSQIENYESEMSVTDVGTVLQIGDGIALIHGLNDVMAGELVEFHNGVLGLAQNLEESNVGVVILGPYTGITEGDEVKRTGRIMEVPVGEELIGRVVNPLGQPIDGQGPINTTKTRPVEKKATGVMDRKSVDEPLQTGIKAIDALVPIGRGQRELIIGDRQTGKTTIAIDTILNQKDQGTICIYVAIGQKDSTVRANVEKLRQAGALDYTIVVAASASEPSPLLYIAPYSGVTMGEEFMFNGKHVLIVYDDLTKQAAAYRELSLLLRRPPGREAYPGDVFYLHSRLLERAAKLNDDLGGGSITALPIIETQAGDISAYVPTNVISITDGQIFLQSDLFFSGVRPAINAGQSVSRVGGSAQINAMKKVAGTLRLDLASYRELESFAQFGSDLDEFTASKLERGKRTVEVLKQDQNKPLPVEHQVLIIYALTKGYLDDIPVVDITRFEDELNHWAESNATELLNEIRETGGLPDAEKFDTAINEFKKSFSKSE.

169-176 (GDRQTGKT) is a binding site for ATP.

Belongs to the ATPase alpha/beta chains family. In terms of assembly, F-type ATPases have 2 components, CF(1) - the catalytic core - and CF(0) - the membrane proton channel. CF(1) has five subunits: alpha(3), beta(3), gamma(1), delta(1), epsilon(1). CF(0) has three main subunits: a(1), b(2) and c(9-12). The alpha and beta chains form an alternating ring which encloses part of the gamma chain. CF(1) is attached to CF(0) by a central stalk formed by the gamma and epsilon chains, while a peripheral stalk is formed by the delta and b chains.

Its subcellular location is the cell membrane. It catalyses the reaction ATP + H2O + 4 H(+)(in) = ADP + phosphate + 5 H(+)(out). Functionally, produces ATP from ADP in the presence of a proton gradient across the membrane. The alpha chain is a regulatory subunit. This is ATP synthase subunit alpha from Staphylococcus aureus (strain COL).